Consider the following 158-residue polypeptide: Endoribonuclease YbeY (158 aa).

Zn(2+) contacts are provided by His-119, His-123, and Asp-129.

It belongs to the endoribonuclease YbeY family. The cofactor is Zn(2+).

The protein resides in the cytoplasm. Its function is as follows. Single strand-specific metallo-endoribonuclease involved in late-stage 70S ribosome quality control and in maturation of the 3' terminus of the 16S rRNA. The protein is Endoribonuclease YbeY of Chlamydia caviae (strain ATCC VR-813 / DSM 19441 / 03DC25 / GPIC) (Chlamydophila caviae).